A 296-amino-acid chain; its full sequence is Polyamine aminopropyltransferase (296 aa).

Residues 5–238 enclose the PABS domain; it reads ELWYETLHAN…GIMTFAWATQ (234 aa). Gln-33 is an S-methyl-5'-thioadenosine binding site. His-64 and Asp-88 together coordinate spermidine. Residues Glu-108 and 140–141 each bind S-methyl-5'-thioadenosine; that span reads DG. Asp-158 acts as the Proton acceptor in catalysis. A spermidine-binding site is contributed by 158 to 161; the sequence is DCTD. Pro-165 contacts S-methyl-5'-thioadenosine.

Belongs to the spermidine/spermine synthase family. Homodimer or homotetramer.

It localises to the cytoplasm. It carries out the reaction S-adenosyl 3-(methylsulfanyl)propylamine + putrescine = S-methyl-5'-thioadenosine + spermidine + H(+). It functions in the pathway amine and polyamine biosynthesis; spermidine biosynthesis; spermidine from putrescine: step 1/1. In terms of biological role, catalyzes the irreversible transfer of a propylamine group from the amino donor S-adenosylmethioninamine (decarboxy-AdoMet) to putrescine (1,4-diaminobutane) to yield spermidine. This chain is Polyamine aminopropyltransferase, found in Yersinia pseudotuberculosis serotype O:3 (strain YPIII).